Here is a 466-residue protein sequence, read N- to C-terminus: UDP-N-acetylmuramoylalanine--D-glutamate ligase (466 aa).

128-134 is an ATP binding site; the sequence is GTNGKST.

The protein belongs to the MurCDEF family.

It localises to the cytoplasm. The enzyme catalyses UDP-N-acetyl-alpha-D-muramoyl-L-alanine + D-glutamate + ATP = UDP-N-acetyl-alpha-D-muramoyl-L-alanyl-D-glutamate + ADP + phosphate + H(+). It functions in the pathway cell wall biogenesis; peptidoglycan biosynthesis. Functionally, cell wall formation. Catalyzes the addition of glutamate to the nucleotide precursor UDP-N-acetylmuramoyl-L-alanine (UMA). The protein is UDP-N-acetylmuramoylalanine--D-glutamate ligase of Bartonella henselae (strain ATCC 49882 / DSM 28221 / CCUG 30454 / Houston 1) (Rochalimaea henselae).